Reading from the N-terminus, the 89-residue chain is Large ribosomal subunit protein bL27 (89 aa).

The interval 1 to 22 is disordered; it reads MAHKKAGGSSRNGRDSESKRLG.

The protein belongs to the bacterial ribosomal protein bL27 family.

The chain is Large ribosomal subunit protein bL27 from Rhizobium etli (strain CIAT 652).